The chain runs to 228 residues: N-acetyltransferase family 8 member 3 (228 aa).

Helical transmembrane passes span Met-36–Ala-56 and Gly-58–Ala-78. Positions Leu-61–Tyr-217 constitute an N-acetyltransferase domain.

The protein belongs to the camello family.

It is found in the nucleus membrane. The protein localises to the cytoplasm. Its subcellular location is the perinuclear region. It catalyses the reaction L-lysyl-[protein] + acetyl-CoA = N(6)-acetyl-L-lysyl-[protein] + CoA + H(+). Functionally, has histone acetyltransferase activity in vitro, with specificity for histone H4. This Rattus norvegicus (Rat) protein is N-acetyltransferase family 8 member 3.